Here is a 297-residue protein sequence, read N- to C-terminus: ER membrane protein complex subunit 2 (297 aa).

Alanine 2 carries the N-acetylalanine modification. TPR repeat units lie at residues 87–120 (HRVK…DPTN), 155–188 (QEAW…NPYN), and 192–225 (CQQY…NNRN). Lysine 255 is modified (N6-acetyllysine).

The protein belongs to the EMC2 family. In terms of assembly, component of the ER membrane protein complex (EMC).

It localises to the endoplasmic reticulum membrane. Functionally, part of the endoplasmic reticulum membrane protein complex (EMC) that enables the energy-independent insertion into endoplasmic reticulum membranes of newly synthesized membrane proteins. Preferentially accommodates proteins with transmembrane domains that are weakly hydrophobic or contain destabilizing features such as charged and aromatic residues. Involved in the cotranslational insertion of multi-pass membrane proteins in which stop-transfer membrane-anchor sequences become ER membrane spanning helices. It is also required for the post-translational insertion of tail-anchored/TA proteins in endoplasmic reticulum membranes. By mediating the proper cotranslational insertion of N-terminal transmembrane domains in an N-exo topology, with translocated N-terminus in the lumen of the ER, controls the topology of multi-pass membrane proteins like the G protein-coupled receptors. By regulating the insertion of various proteins in membranes, it is indirectly involved in many cellular processes. This is ER membrane protein complex subunit 2 from Bos taurus (Bovine).